The primary structure comprises 231 residues: uncharacterized protein (231 aa).

The signal sequence occupies residues 1 to 19; that stretch reads MKFKFLLTPLLSSVLFLSA. Cys-20 carries the N-palmitoyl cysteine lipid modification. Cys-20 carries the S-diacylglycerol cysteine lipid modification.

Belongs to the MG439/MG440 family.

It localises to the cell membrane. This is an uncharacterized protein from Mycoplasma pneumoniae (strain ATCC 29342 / M129 / Subtype 1) (Mycoplasmoides pneumoniae).